A 269-amino-acid chain; its full sequence is Pertussis toxin subunit 1 (269 aa).

The first 34 residues, 1 to 34, serve as a signal peptide directing secretion; the sequence is MRCTRAIRQTARTGWLTWLAILAVTAPVTSPAWA. Trp-60 is a binding site for NAD(+). Catalysis depends on residues His-69 and Glu-163. Cys-75 and Cys-235 are disulfide-bonded.

The protein belongs to the bacterial exotoxin subunit A family. As to quaternary structure, pertussis toxin contains five different chains, S1-S5. They are organized into 2 functional subunits: A, composed of S1 (which is toxic) and B, containing S2, S3, S5, and two copies of S4 (B binds to the membrane receptors). Dimers of S2-S4 and S3-S4 are held together by S5.

Its subcellular location is the secreted. In terms of biological role, S1 is an NAD-dependent ADP-ribosyltransferase, which plays a crucial role in the pathogenesis of B.pertussis causing disruption of normal host cellular regulation. It catalyzes the ADP-ribosylation of a cysteine in the alpha subunit of host heterotrimeric G proteins. In the absence of G proteins it also catalyzes the cleavage of NAD(+) into ADP-ribose and nicotinamide. It irreversibly uncouples the G-alpha GTP-binding proteins from their membrane receptors. The polypeptide is Pertussis toxin subunit 1 (ptxA) (Bordetella pertussis (strain Tohama I / ATCC BAA-589 / NCTC 13251)).